The primary structure comprises 392 residues: Stilbene synthase 2 (392 aa).

A substrate-binding site is contributed by 55–58 (KFNR). Cys-164 is an active-site residue. Substrate contacts are provided by residues Leu-267 and 305 to 307 (GGP).

It belongs to the thiolase-like superfamily. Chalcone/stilbene synthases family. As to quaternary structure, homodimer.

The protein resides in the cytoplasm. The catalysed reaction is 4-coumaroyl-CoA + 3 malonyl-CoA + 3 H(+) = trans-resveratrol + 4 CO2 + 4 CoA. It functions in the pathway phytoalexin biosynthesis; 3,4',5-trihydroxystilbene biosynthesis; 3,4',5-trihydroxystilbene from trans-4-coumarate: step 2/2. Its function is as follows. Mediates resistance to pathogens which are sensitive to stilbenes. The chain is Stilbene synthase 2 from Vitis vinifera (Grape).